The following is a 76-amino-acid chain: uncharacterized protein (76 aa).

This is an uncharacterized protein from Ornithodoros (relapsing fever ticks).